Reading from the N-terminus, the 137-residue chain is Oleosin Ara h 11.0102 (137 aa).

An N-acetylalanine; alternate modification is found at A2. 2 consecutive transmembrane segments (helical) span residues 27–47 and 55–75; these read AVVA…ATVI and LFVI…LLGL.

The protein belongs to the oleosin family. In terms of tissue distribution, expressed in seeds (at protein level).

The protein localises to the lipid droplet. The protein resides in the membrane. In terms of biological role, may have a structural role to stabilize the lipid body during desiccation of the seed by preventing coalescence of the oil. Probably interacts with both lipid and phospholipid moieties of lipid bodies. May also provide recognition signals for specific lipase anchorage in lipolysis during seedling growth. In Arachis hypogaea (Peanut), this protein is Oleosin Ara h 11.0102.